A 145-amino-acid polypeptide reads, in one-letter code: Ribosomal RNA large subunit methyltransferase H (145 aa).

Residues Leu-64, Gly-93, and 112 to 117 (LSPLTF) contribute to the S-adenosyl-L-methionine site.

It belongs to the RNA methyltransferase RlmH family. In terms of assembly, homodimer.

It is found in the cytoplasm. It carries out the reaction pseudouridine(1915) in 23S rRNA + S-adenosyl-L-methionine = N(3)-methylpseudouridine(1915) in 23S rRNA + S-adenosyl-L-homocysteine + H(+). Functionally, specifically methylates the pseudouridine at position 1915 (m3Psi1915) in 23S rRNA. The sequence is that of Ribosomal RNA large subunit methyltransferase H from Prochlorococcus marinus (strain MIT 9211).